A 66-amino-acid polypeptide reads, in one-letter code: Regulator of G-protein signaling 6 (66 aa).

The region spanning 1-66 is the RGS domain; sequence LAVQDLKKQP…EDAQEHIYKL (66 aa).

In terms of assembly, interacts with GNB5. Interacts with RGS7BP, leading to regulate the subcellular location of the heterodimer formed with GNB5. Interacts with GNAI1.

Its subcellular location is the cytoplasm. The protein resides in the cytosol. It localises to the membrane. The protein localises to the nucleus. It is found in the cell membrane. Its function is as follows. Regulates G protein-coupled receptor signaling cascades. Inhibits signal transduction by increasing the GTPase activity of G protein alpha subunits, thereby driving them into their inactive GDP-bound form. The RGS6/GNB5 dimer enhances GNAO1 GTPase activity. The polypeptide is Regulator of G-protein signaling 6 (Rgs6) (Rattus norvegicus (Rat)).